We begin with the raw amino-acid sequence, 321 residues long: Lipoyl synthase (321 aa).

[4Fe-4S] cluster is bound by residues cysteine 68, cysteine 73, cysteine 79, cysteine 94, cysteine 98, cysteine 101, and serine 308. A Radical SAM core domain is found at 80 to 297 (FNHGTATFMI…KEEALAMGFT (218 aa)).

It belongs to the radical SAM superfamily. Lipoyl synthase family. [4Fe-4S] cluster serves as cofactor.

The protein resides in the cytoplasm. It carries out the reaction [[Fe-S] cluster scaffold protein carrying a second [4Fe-4S](2+) cluster] + N(6)-octanoyl-L-lysyl-[protein] + 2 oxidized [2Fe-2S]-[ferredoxin] + 2 S-adenosyl-L-methionine + 4 H(+) = [[Fe-S] cluster scaffold protein] + N(6)-[(R)-dihydrolipoyl]-L-lysyl-[protein] + 4 Fe(3+) + 2 hydrogen sulfide + 2 5'-deoxyadenosine + 2 L-methionine + 2 reduced [2Fe-2S]-[ferredoxin]. It participates in protein modification; protein lipoylation via endogenous pathway; protein N(6)-(lipoyl)lysine from octanoyl-[acyl-carrier-protein]: step 2/2. Its function is as follows. Catalyzes the radical-mediated insertion of two sulfur atoms into the C-6 and C-8 positions of the octanoyl moiety bound to the lipoyl domains of lipoate-dependent enzymes, thereby converting the octanoylated domains into lipoylated derivatives. The sequence is that of Lipoyl synthase from Photorhabdus laumondii subsp. laumondii (strain DSM 15139 / CIP 105565 / TT01) (Photorhabdus luminescens subsp. laumondii).